Consider the following 945-residue polypeptide: Isoleucine--tRNA ligase (945 aa).

The short motif at 66–76 (PYANGDIHLGH) is the 'HIGH' region element. E581 is a binding site for L-isoleucyl-5'-AMP. The 'KMSKS' region motif lies at 622 to 626 (KMSKS). Residue K625 participates in ATP binding. Residues C908, C911, C928, and C931 each contribute to the Zn(2+) site.

Belongs to the class-I aminoacyl-tRNA synthetase family. IleS type 1 subfamily. In terms of assembly, monomer. The cofactor is Zn(2+).

The protein resides in the cytoplasm. The enzyme catalyses tRNA(Ile) + L-isoleucine + ATP = L-isoleucyl-tRNA(Ile) + AMP + diphosphate. In terms of biological role, catalyzes the attachment of isoleucine to tRNA(Ile). As IleRS can inadvertently accommodate and process structurally similar amino acids such as valine, to avoid such errors it has two additional distinct tRNA(Ile)-dependent editing activities. One activity is designated as 'pretransfer' editing and involves the hydrolysis of activated Val-AMP. The other activity is designated 'posttransfer' editing and involves deacylation of mischarged Val-tRNA(Ile). The protein is Isoleucine--tRNA ligase of Burkholderia orbicola (strain MC0-3).